A 245-amino-acid chain; its full sequence is Thiamine phosphate phosphatase-like protein (245 aa).

Residue Asp9 is the Nucleophile of the active site. Asp9, Asp11, and Asp179 together coordinate Mg(2+). Catalysis depends on Asp11, which acts as the Proton donor.

The protein belongs to the HAD-like hydrolase superfamily. As to quaternary structure, monomer. It depends on Mg(2+) as a cofactor.

It catalyses the reaction thiamine phosphate + H2O = thiamine + phosphate. Its function is as follows. HAD-like hydrolase that has a thiamine monophosphate phosphatase activity in a heterologous system. Does not contribute to thiamine monophosphate phosphatase activity in planta. The sequence is that of Thiamine phosphate phosphatase-like protein from Arabidopsis thaliana (Mouse-ear cress).